We begin with the raw amino-acid sequence, 408 residues long: Imidazolonepropionase (408 aa).

Fe(3+) is bound by residues His-73 and His-75. His-73 and His-75 together coordinate Zn(2+). 4-imidazolone-5-propanoate contacts are provided by Arg-82, Tyr-145, and His-178. Residue Tyr-145 coordinates N-formimidoyl-L-glutamate. His-243 is a Fe(3+) binding site. Position 243 (His-243) interacts with Zn(2+). 4-imidazolone-5-propanoate is bound at residue Gln-246. Residue Asp-318 participates in Fe(3+) binding. Residue Asp-318 participates in Zn(2+) binding. Residues Asn-320 and Gly-322 each coordinate N-formimidoyl-L-glutamate. Ser-323 is a 4-imidazolone-5-propanoate binding site.

This sequence belongs to the metallo-dependent hydrolases superfamily. HutI family. Requires Zn(2+) as cofactor. It depends on Fe(3+) as a cofactor.

It localises to the cytoplasm. It catalyses the reaction 4-imidazolone-5-propanoate + H2O = N-formimidoyl-L-glutamate. Its pathway is amino-acid degradation; L-histidine degradation into L-glutamate; N-formimidoyl-L-glutamate from L-histidine: step 3/3. In terms of biological role, catalyzes the hydrolytic cleavage of the carbon-nitrogen bond in imidazolone-5-propanoate to yield N-formimidoyl-L-glutamate. It is the third step in the universal histidine degradation pathway. This is Imidazolonepropionase from Shewanella sp. (strain ANA-3).